The chain runs to 402 residues: uncharacterized protein (402 aa).

The Cytoplasmic segment spans residues 1-11; sequence MTPSNYQRTRW. Residues 12–34 form a helical membrane-spanning segment; sequence LTLIGTIITQFALGSVYTWSLFN. Over 35–43 the chain is Periplasmic; it reads GALSAKLDA. Residues 44-66 traverse the membrane as a helical segment; sequence PVSQVAFSFGLLSLGLAISSSVA. Topologically, residues 67–72 are cytoplasmic; it reads GKLQER. The chain crosses the membrane as a helical span at residues 73 to 95; it reads FGVKRVTMASGILLGLGFFLTAH. Residues 96-99 lie on the Periplasmic side of the membrane; it reads SDNL. The helical transmembrane segment at 100–122 threads the bilayer; it reads MMLWLSAGVLVGLADGAGYLLTL. At 123–134 the chain is on the cytoplasmic side; the sequence is SNCVKWFPERKG. The chain crosses the membrane as a helical span at residues 135–154; the sequence is LISAFAIGSYGLGSLGFKFI. Residues 155–168 lie on the Periplasmic side of the membrane; it reads DTQLLETVGLEKTF. The helical transmembrane segment at 169–186 threads the bilayer; it reads VIWGAIALLMIVFGATLM. At 187-216 the chain is on the cytoplasmic side; that stretch reads KDAPKQEVKTSNGVVEKDYTLAESMRKPQY. A helical membrane pass occupies residues 217–236; it reads WMLAVMFLTACMSGLYVIGV. Residues 237-250 lie on the Periplasmic side of the membrane; the sequence is AKDIAQSLAHLDVV. Residues 251–273 traverse the membrane as a helical segment; sequence SAANAVTVISIANLSGRLVLGIL. Residues 274–279 are Cytoplasmic-facing; that stretch reads SDKIAR. The chain crosses the membrane as a helical span at residues 280-302; that stretch reads IRVITIGQVISLVGMAALLFAPL. The Periplasmic portion of the chain corresponds to 303 to 306; it reads NAVT. The chain crosses the membrane as a helical span at residues 307-329; sequence FFAAIACVAFNFGGTITVFPSLV. At 330–341 the chain is on the cytoplasmic side; it reads SEFFGLNNLAKN. The helical transmembrane segment at 342–364 threads the bilayer; it reads YGVIYLGFGIGSICGSIIASLFG. Residues 365–367 lie on the Periplasmic side of the membrane; the sequence is GFY. Residues 368-387 form a helical membrane-spanning segment; it reads VTFYVIFALLILSLALSTTI. The Cytoplasmic segment spans residues 388-402; it reads RQPEQKMLREAHGSL.

The protein belongs to the major facilitator superfamily. In terms of assembly, interacts with BtsS and YpdA.

It is found in the cell inner membrane. Its function is as follows. Part of a nutrient-sensing regulatory network composed of the two-component regulatory systems BtsS/BtsR and YpdA/YpdB, and their respective target proteins, BtsT and YhjX. This is an uncharacterized protein from Escherichia coli (strain K12).